The chain runs to 714 residues: Polyribonucleotide nucleotidyltransferase (714 aa).

Mg(2+) contacts are provided by aspartate 488 and aspartate 494. One can recognise a KH domain in the interval 555–614 (PRIEVMNIPTDKIRDVIGSGGKVIREIVEKTGAKINIEDDGTVKIASSNGKEIEAAKKWI). Residues 624–692 (GEIYEGTVVK…ERGKVRLSMK (69 aa)) enclose the S1 motif domain.

It belongs to the polyribonucleotide nucleotidyltransferase family. Mg(2+) serves as cofactor.

The protein resides in the cytoplasm. It catalyses the reaction RNA(n+1) + phosphate = RNA(n) + a ribonucleoside 5'-diphosphate. Functionally, involved in mRNA degradation. Catalyzes the phosphorolysis of single-stranded polyribonucleotides processively in the 3'- to 5'-direction. The chain is Polyribonucleotide nucleotidyltransferase from Brucella ovis (strain ATCC 25840 / 63/290 / NCTC 10512).